The chain runs to 105 residues: Large ribosomal subunit protein uL24 (105 aa).

Belongs to the universal ribosomal protein uL24 family. As to quaternary structure, part of the 50S ribosomal subunit.

Functionally, one of two assembly initiator proteins, it binds directly to the 5'-end of the 23S rRNA, where it nucleates assembly of the 50S subunit. Its function is as follows. One of the proteins that surrounds the polypeptide exit tunnel on the outside of the subunit. The protein is Large ribosomal subunit protein uL24 of Aliivibrio salmonicida (strain LFI1238) (Vibrio salmonicida (strain LFI1238)).